The following is a 321-amino-acid chain: 5,10-methylenetetrahydromethanopterin reductase (321 aa).

This sequence belongs to the mer family.

It is found in the cytoplasm. The catalysed reaction is 5-methyl-5,6,7,8-tetrahydromethanopterin + oxidized coenzyme F420-(gamma-L-Glu)(n) + H(+) = 5,10-methylenetetrahydromethanopterin + reduced coenzyme F420-(gamma-L-Glu)(n). The protein operates within one-carbon metabolism; methanogenesis from CO(2); methyl-coenzyme M from 5,10-methylene-5,6,7,8-tetrahydromethanopterin: step 1/2. Its function is as follows. Catalyzes the reversible reduction of methylene-H(4)MPT to methyl-H(4)MPT. The polypeptide is 5,10-methylenetetrahydromethanopterin reductase (Methanothermobacter thermautotrophicus (strain ATCC 29096 / DSM 1053 / JCM 10044 / NBRC 100330 / Delta H) (Methanobacterium thermoautotrophicum)).